The primary structure comprises 147 residues: Microtubule-associated protein 1 light chain 3 gamma (147 aa).

Phosphoserine; by TBK1 is present on residues Ser-93 and Ser-96. Residue Gly-126 is the site of Phosphatidylethanolamine amidated glycine; alternate attachment. Gly-126 is lipidated: Phosphatidylserine amidated glycine; alternate. Residues 127–147 constitute a propeptide, removed in mature form; it reads CLESAAPRDGSSLEDRPCNPL.

It belongs to the ATG8 family. In terms of assembly, 3 different light chains, LC1 (a cleavage product of MAP1B), LC2 (a cleavage product of MAP1A) and LC3 (produced by one of the MAP1LC3 genes), can associate with the MAP1A or MAP1B heavy chains. Interacts with TP53INP1 and TP53INP2. Interacts with CALCOCO2. Interacts with TECPR2. Interacts with TBC1D5. Found in a complex with UBQLN1 and UBQLN2. Interacts with UBQLN4 (via STI1 1 and 2 domains). Interacts with UBQLN1 in the presence of UBQLN4. Interacts with TRIM5. Interacts with ATG13. Interacts with MEFV and TRIM21. Interacts with WDR81; recruits MAP1LC3C to ubiquitinated protein aggregates in the aggrephagy process. Interacts with MOAP1 (via LIR motif). Interacts with reticulophagy regulators RETREG1, RETREG2 and RETREG3. Interacts with TAX1BP1. Interacts with IRGM. Interacts with SPART. Post-translationally, the precursor molecule is cleaved by ATG4 (ATG4A, ATG4B, ATG4C or ATG4D) to expose the glycine at the C-terminus and form the cytosolic form, LC3-I. The processed form is then activated by APG7L/ATG7, transferred to ATG3 and conjugated to phosphatidylethanolamine (PE) phospholipid to form the membrane-bound form, LC3-II. During non-canonical autophagy, the processed form is conjugated to phosphatidylserine (PS) phospholipid. ATG4 proteins also mediate the delipidation of PE-conjugated forms. In addition, ATG4B and ATG4D mediate delipidation of ATG8 proteins conjugated to PS during non-canonical autophagy. In terms of processing, (Microbial infection) The Legionella effector RavZ is a deconjugating enzyme that hydrolyzes the amide bond between the C-terminal glycine residue and an adjacent aromatic residue in ATG8 proteins conjugated to phosphatidylethanolamine (PE), producing an ATG8 protein that is resistant to reconjugation by the host machinery due to the cleavage of the reactive C-terminal glycine. RavZ is also able to mediate delipidation of ATG8 proteins conjugated to phosphatidylserine (PS). Phosphorylation at Ser-96 and Ser-98 by TBK1 prevents interaction with ATG4 (ATG4A, ATG4B, ATG4C or ATG4D). Phosphorylation by TBK1 on autophagosomes prevents their delipidation by ATG4 and premature removal from nascent autophagosomes. Most abundant in placenta, lung and ovary.

It localises to the cytoplasmic vesicle. The protein localises to the autophagosome membrane. Its subcellular location is the endomembrane system. The protein resides in the cytoplasm. It is found in the cytoskeleton. Functionally, ubiquitin-like modifier that plays a crucial role in antibacterial autophagy (xenophagy) through the selective binding of CALCOCO2. Recruits all ATG8 family members to infecting bacteria such as S.typhimurium. May also play a role in aggrephagy, the macroautophagic degradation of ubiquitinated and aggregated proteins. The polypeptide is Microtubule-associated protein 1 light chain 3 gamma (MAP1LC3C) (Homo sapiens (Human)).